Reading from the N-terminus, the 367-residue chain is 2-aminoethylphosphonate--pyruvate transaminase (367 aa).

Lys193 bears the N6-(pyridoxal phosphate)lysine mark.

This sequence belongs to the class-V pyridoxal-phosphate-dependent aminotransferase family. PhnW subfamily. Homodimer. The cofactor is pyridoxal 5'-phosphate.

The catalysed reaction is (2-aminoethyl)phosphonate + pyruvate = phosphonoacetaldehyde + L-alanine. Its function is as follows. Involved in phosphonate degradation. This chain is 2-aminoethylphosphonate--pyruvate transaminase, found in Vibrio vulnificus (strain YJ016).